Consider the following 303-residue polypeptide: Probable 5-dehydro-4-deoxyglucarate dehydratase (303 aa).

The protein belongs to the DapA family.

It catalyses the reaction 5-dehydro-4-deoxy-D-glucarate + H(+) = 2,5-dioxopentanoate + CO2 + H2O. Its pathway is carbohydrate acid metabolism; D-glucarate degradation; 2,5-dioxopentanoate from D-glucarate: step 2/2. This is Probable 5-dehydro-4-deoxyglucarate dehydratase from Pseudomonas putida (strain W619).